The primary structure comprises 335 residues: UPF0353 protein MAP_3435c (335 aa).

The next 2 helical transmembrane spans lie at 18–38 (WFFLALLAVLLVIGLYVVQQF) and 67–87 (VPTILLATSLVLLTTAMAGPT). The 197-residue stretch at 98–294 (VVMLVIDVSE…DSLKNVYSTL (197 aa)) folds into the VWFA domain. A helical membrane pass occupies residues 309–329 (MAWMLLGAVVLAGAVLAGLLL).

It belongs to the UPF0353 family.

It localises to the cell membrane. This chain is UPF0353 protein MAP_3435c, found in Mycolicibacterium paratuberculosis (strain ATCC BAA-968 / K-10) (Mycobacterium paratuberculosis).